The primary structure comprises 306 residues: D-alanine--D-alanine ligase (306 aa).

The ATP-grasp domain maps to 102 to 300 (KIIAANAGVC…YGDIVQWMVE (199 aa)). 128–183 (PMEPPYVIKPVCEGSSFGVVIVQENEAVPPHNIGGSEWGYADEVMVEKYIPGRELT) is a binding site for ATP. 3 residues coordinate Mg(2+): Asp253, Glu267, and Asn269.

This sequence belongs to the D-alanine--D-alanine ligase family. Mg(2+) is required as a cofactor. Mn(2+) serves as cofactor.

It is found in the cytoplasm. It carries out the reaction 2 D-alanine + ATP = D-alanyl-D-alanine + ADP + phosphate + H(+). Its pathway is cell wall biogenesis; peptidoglycan biosynthesis. Functionally, cell wall formation. This chain is D-alanine--D-alanine ligase, found in Bartonella tribocorum (strain CIP 105476 / IBS 506).